A 358-amino-acid polypeptide reads, in one-letter code: Insulin gene enhancer protein ISL-2A (358 aa).

2 consecutive LIM zinc-binding domains span residues C27 to D80 and C89 to H143. Residues T190 to S249 constitute a DNA-binding region (homeobox). A compositionally biased stretch (low complexity) spans E325–S335. Positions E325–T358 are disordered. Residues D336–T358 show a composition bias toward polar residues.

Its subcellular location is the nucleus. In terms of biological role, binds to one of the cis-acting domain of the insulin gene enhancer. May be involved in subtype specialization of primary motoneurons. In Oncorhynchus tshawytscha (Chinook salmon), this protein is Insulin gene enhancer protein ISL-2A (isl2a).